A 419-amino-acid polypeptide reads, in one-letter code: Carboxypeptidase A2 (419 aa).

An N-terminal signal peptide occupies residues 1–18 (MAMRLILFFGALFGHIYC). Residues 19–114 (LETFVGDQVL…EMLFNRRRER (96 aa)) constitute a propeptide, activation peptide. The Peptidase M14 domain maps to 122 to 414 (AYHTLEEISQ…LGLKAIMEHV (293 aa)). Residues His179 and Glu182 each coordinate Zn(2+). Substrate-binding positions include 179-182 (HARE), Arg237, and 254-255 (NR). Cys248 and Cys271 are oxidised to a cystine. His306 contacts Zn(2+). 307-308 (SY) provides a ligand contact to substrate. Cys320 and Cys354 are disulfide-bonded. Tyr358 is a substrate binding site. Glu380 functions as the Proton donor/acceptor in the catalytic mechanism.

This sequence belongs to the peptidase M14 family. The cofactor is Zn(2+).

It localises to the secreted. It carries out the reaction Similar to that of carboxypeptidase A (EC 3.4.17.1), but with a preference for bulkier C-terminal residues.. Carboxypeptidase that catalyzes the release of a C-terminal amino acid, with a preference for large aromatic C-terminal residues. The chain is Carboxypeptidase A2 (CPA2) from Homo sapiens (Human).